A 499-amino-acid polypeptide reads, in one-letter code: Putative DBH-like monooxygenase protein 2 (499 aa).

The signal sequence occupies residues 1–16; sequence MAHDLLFRLFPLLALG. In terms of domain architecture, DOMON spans 40–156; it reads NVIFLRWDFD…NTVRVLAAYG (117 aa). Residue Tyr209 is part of the active site. 2 disulfide bridges follow: Cys211/Cys261 and Cys248/Cys271. Residue Asn236 is glycosylated (N-linked (GlcNAc...) asparagine). The Cu cation site is built by His241 and His242. Asn250 carries an N-linked (GlcNAc...) asparagine glycan. Residues His308, His389, and His391 each coordinate Cu cation. Disulfide bonds link Cys365-Cys480 and Cys443-Cys465. The active site involves His389. Residue Asn404 is glycosylated (N-linked (GlcNAc...) asparagine). A Cu cation-binding site is contributed by Met464. A glycan (N-linked (GlcNAc...) asparagine) is linked at Asn476.

Belongs to the copper type II ascorbate-dependent monooxygenase family. Cu(2+) serves as cofactor.

The sequence is that of Putative DBH-like monooxygenase protein 2 (MOXD2P) from Homo sapiens (Human).